A 603-amino-acid polypeptide reads, in one-letter code: Beta-hexosaminidase (603 aa).

An N-terminal signal peptide occupies residues 1-19 (MAYFRLYAVLLAVASSVAA). Residues aspartate 225, histidine 278, and glutamate 349 each act as charge relay system in the active site. Cysteine 293 and cysteine 354 are disulfide-bonded. N-linked (GlcNAc...) asparagine glycosylation occurs at asparagine 356. Cysteine 451 and cysteine 486 are disulfide-bonded. Residues asparagine 503 and asparagine 528 are each glycosylated (N-linked (GlcNAc...) asparagine). The cysteines at positions 586 and 593 are disulfide-linked.

Belongs to the glycosyl hydrolase 20 family. In terms of assembly, homodimer.

The protein resides in the secreted. It carries out the reaction Hydrolysis of terminal non-reducing N-acetyl-D-hexosamine residues in N-acetyl-beta-D-hexosaminides.. Functionally, part of the binary chitinolytic system. Involved in hydrolysis of chitobiose and higher chito-oligomers (produced from cell wall chitin by endochitinases), thus contributing to the formation of germ tubes, fruit-bodies and septa during hyphenation. Hydrolyzes synthetic substrates p-nitrophenyl-beta-N-acetyl-glucosamine (pNP-beta-GlcNAc), p-nitrophenyl-beta-N-acetyl-galactosamine (pNP-beta-GalNAc) and 5-bromo-4-chloro-3-indoyl-beta-D-N-glucosaminide (X-GlcNAc). This chain is Beta-hexosaminidase, found in Emericella nidulans (Aspergillus nidulans).